Here is a 317-residue protein sequence, read N- to C-terminus: Probable transcription factor At5g61620 (317 aa).

The CCHC-type zinc-finger motif lies at 12-25 (CSHCGHNGHNARTC). A disordered region spans residues 77 to 111 (DPIAAVDDTGYHSDGQIHSKKGKTAHEKKKGKPWT). The segment covering 94 to 108 (HSKKGKTAHEKKKGK) has biased composition (basic residues). In terms of domain architecture, HTH myb-type spans 102–158 (HEKKKGKPWTEEEHRNFLIGLNKLGKGDWRGIAKSFVSTRTPTQVASHAQKYFIRLN). Positions 130-154 (WRGIAKSFVSTRTPTQVASHAQKYF) form a DNA-binding region, H-T-H motif. The segment at 173-206 (SLEDQKEKERNSQDASTKTPPKQPITGIQQPVVQ) is disordered. Positions 175–184 (EDQKEKERNS) are enriched in basic and acidic residues. Residues 185–206 (QDASTKTPPKQPITGIQQPVVQ) are compositionally biased toward polar residues.

It is found in the nucleus. Functionally, probable transcription factor involved in somatic embryogenesis. Acts as a positive regulator of BHLH109. The sequence is that of Probable transcription factor At5g61620 from Arabidopsis thaliana (Mouse-ear cress).